We begin with the raw amino-acid sequence, 454 residues long: MTFLDRTMSFWAVSRGLTPPSKVVPMLNPNQRQFLEDEVRYREKLKLMARGDAMEEVYVRKQETVDDPLELDKHDSFYQTTKSLLVLFQIMGVMPIHRNPPEKNLPRTGYSWGSKQVMWAIFIYSCQTTIVVLVLRERVKKFVTSPDKRFDEAIYNVIFISLLFTNFLLPVASWRHGPQVAIFKNMWTNYQYKFFKTTGSPIVFPNLYPLTWSLCVFSWLLSIAINLSQYFLQPDFRLWYTFAYYPIIAMLNCFCSLWYINCNAFGTASRALSDALQTTIRGEKPAQKLTEYRHLWVDLSHMMQQLGRAYSNMYGMYCLVIFFTTIIATYGSISEIIDHGATYKEVGLFVIVFYCMGLLYIICNEAHYASRKVGLDFQTKLLNINLTAVDAATQKEVEMLLVAINKNPPIMNLDGYANINRELITTNISFMATYLVVLLQFKITEQRRIGQQQA.

The Cytoplasmic portion of the chain corresponds to M1–S114. A helical transmembrane segment spans residues K115–L135. Topologically, residues R136 to A153 are extracellular. A helical transmembrane segment spans residues I154–W174. Topologically, residues R175 to N206 are cytoplasmic. Residues L207–L227 form a helical membrane-spanning segment. Residues S228 to R237 are Extracellular-facing. The helical transmembrane segment at L238 to W258 threads the bilayer. Residues Y259 to N312 lie on the Cytoplasmic side of the membrane. The chain crosses the membrane as a helical span at residues M313–I333. Residues S334 to E345 are Extracellular-facing. A helical transmembrane segment spans residues V346–A366. At H367–E422 the chain is on the cytoplasmic side. Residues L423 to I443 form a helical membrane-spanning segment. The Extracellular portion of the chain corresponds to T444–A454.

The protein belongs to the insect chemoreceptor superfamily. Gustatory receptor (GR) family. Gr21a subfamily. In terms of assembly, gr21a and Gr63a probably form a heterodimer that responds to CO(2). Expressed in the adult labellar chemosensory neurons. Carbon dioxide-responsive neurons coexpress Gr21a and Gr63a in a pair of chemosensory receptors at both larval and adult life stages. A single bilateral neuron, expressing the Gr21a receptor, is responsible for CO(2) detection in larvae.

It localises to the cell membrane. Functionally, gustatory and odorant receptor which mediates acceptance or avoidance behavior, depending on its substrates. Gr21a and Gr63a together are sufficient for carbon dioxide detection and avoidance behavior. It is possible that the CO(2) receptors Gr63a and Gr21a activate the TRPC channels through Galpha49B and Plc21C. This innate olfactory avoidance behavior can be inhibited by inhibitory interactions of the odors such as 1-hexanol and 2,3-butanedione with Gr21a and Gr63a. This chain is Gustatory and odorant receptor 21a (Gr21a), found in Drosophila melanogaster (Fruit fly).